A 627-amino-acid polypeptide reads, in one-letter code: uncharacterized protein (627 aa).

Disordered stretches follow at residues 441–466 (EAVP…QGEN) and 608–627 (DLRG…TEDR). A compositionally biased stretch (basic and acidic residues) spans 615–627 (DYERGKGESTEDR).

This is an uncharacterized protein from Homo sapiens (Human).